A 102-amino-acid polypeptide reads, in one-letter code: Large ribosomal subunit protein bL21 (102 aa).

Belongs to the bacterial ribosomal protein bL21 family. As to quaternary structure, part of the 50S ribosomal subunit. Contacts protein L20.

Its function is as follows. This protein binds to 23S rRNA in the presence of protein L20. This is Large ribosomal subunit protein bL21 from Myxococcus xanthus (strain DK1622).